The primary structure comprises 686 residues: Probable metal-nicotianamine transporter YSL10 (686 aa).

Transmembrane regions (helical) follow at residues 36–56 (VTLRALAVSALLGAMFSVIVM), 60–80 (LTTGIIPSLNVSAGLLGFFLL), 109–129 (CVVACSGIAFSGGFGSYIFAM), 151–171 (LGWMIGFLFIVSFLGLFSVVP), 212–232 (MLGKFFVMSFSWGFFQWFYTG), 271–291 (LVNISVLLGGVMSWGIMWPLI), 316–336 (VFISISLILGDGLYNFLKVMT), 383–403 (IPNWLALSAYVVIAVVSIATV), 415–435 (VAVSYVVAPVLAFCNAYGCGL), 461–481 (GGIIAGLAACGVMIGIVSTAS), 501–521 (FVSQVIGTAMGCVIAPSVFWL), 556–576 (GSLPKHCLDLCIGFFVAAIAV), 597–617 (MAIPFYLGPYFGIDMCIGSLI), and 639–659 (GLICGDGIWTLPQSVLALAGV).

It belongs to the YSL (TC 2.A.67.2) family.

Its subcellular location is the membrane. Functionally, may be involved in the transport of nicotianamine-chelated metals. In Oryza sativa subsp. japonica (Rice), this protein is Probable metal-nicotianamine transporter YSL10 (YSL10).